The sequence spans 106 residues: Ferredoxin-2 (106 aa).

4Fe-4S ferredoxin-type domains follow at residues 2–29 (YVVT…YEGE) and 30–59 (NFLV…GKWL). C8 and C16 together coordinate [3Fe-4S] cluster. 4 residues coordinate [4Fe-4S] cluster: C20, C39, C42, and C45. A [3Fe-4S] cluster-binding site is contributed by C49. The segment at 80–106 (ADADDWKDKPDKTGLLSENPGKGTVCH) is disordered.

The cofactor is [4Fe-4S] cluster. It depends on [3Fe-4S] cluster as a cofactor.

In terms of biological role, ferredoxins are iron-sulfur proteins that transfer electrons in a wide variety of metabolic reactions. The protein is Ferredoxin-2 of Rhodospirillum rubrum.